A 199-amino-acid chain; its full sequence is Recombination protein RecR (199 aa).

Residues 57-72 (CNLCNNFSEQEICPLC) form a C4-type zinc finger. Residues 80 to 175 (TLLCIVEMPS…QVSRIARGLP (96 aa)) form the Toprim domain.

The protein belongs to the RecR family.

Functionally, may play a role in DNA repair. It seems to be involved in an RecBC-independent recombinational process of DNA repair. It may act with RecF and RecO. The sequence is that of Recombination protein RecR from Methylobacillus flagellatus (strain ATCC 51484 / DSM 6875 / VKM B-1610 / KT).